A 247-amino-acid polypeptide reads, in one-letter code: MKVRILTLFPEMFNGPFGTSILKKAQEKELIDIQCFNIRDFALNKHKKVDDYPFGGGAGMVMTPQPIFDCHHHVTQMLNLNEPCKTIYLSPKGSTFTQEKAMELAKEEQLIFLCGHYEGIDQRIIDELVTDEISIGDYVLTGGELPAMVIVDAITRLIPGVLSTEASYEDESFHCGLLEYPHYTRPRAFNGLEVPSVLLSGNHKDIDMWRRKQSIELTFERRPDLLKGLQLKKNEAQWVAELSKKKE.

Residues Gly-115 and 135 to 140 (IGDYVL) each bind S-adenosyl-L-methionine.

It belongs to the RNA methyltransferase TrmD family. In terms of assembly, homodimer.

The protein resides in the cytoplasm. The enzyme catalyses guanosine(37) in tRNA + S-adenosyl-L-methionine = N(1)-methylguanosine(37) in tRNA + S-adenosyl-L-homocysteine + H(+). Its function is as follows. Specifically methylates guanosine-37 in various tRNAs. In Alkaliphilus metalliredigens (strain QYMF), this protein is tRNA (guanine-N(1)-)-methyltransferase.